The following is a 376-amino-acid chain: Glutamate 5-kinase (376 aa).

Lysine 17 is an ATP binding site. Substrate-binding residues include serine 57, aspartate 144, and asparagine 156. 176–177 (TD) is a binding site for ATP. Residues 283 to 361 (KGQLVLDEGA…SEINQLLGYS (79 aa)) form the PUA domain.

Belongs to the glutamate 5-kinase family.

The protein resides in the cytoplasm. The enzyme catalyses L-glutamate + ATP = L-glutamyl 5-phosphate + ADP. It participates in amino-acid biosynthesis; L-proline biosynthesis; L-glutamate 5-semialdehyde from L-glutamate: step 1/2. Its function is as follows. Catalyzes the transfer of a phosphate group to glutamate to form L-glutamate 5-phosphate. In Hydrogenovibrio crunogenus (strain DSM 25203 / XCL-2) (Thiomicrospira crunogena), this protein is Glutamate 5-kinase.